Consider the following 739-residue polypeptide: Poly(A) polymerase alpha (739 aa).

The segment covering 1–17 has biased composition (low complexity); sequence MPFPVTTQGSQQTQPPQ. Residues 1-22 form a disordered region; it reads MPFPVTTQGSQQTQPPQRHYGI. Phosphoserine is present on residues Ser-10 and Ser-24. ATP-binding positions include 100–102, Thr-109, 113–115, Asp-167, Lys-228, Tyr-237, and 246–247; these read FGS, DID, and GV. Positions 113, 115, and 167 each coordinate Mg(2+). Glycyl lysine isopeptide (Lys-Gly) (interchain with G-Cter in SUMO) cross-links involve residues Lys-444, Lys-445, Lys-506, and Lys-507. Positions 490–507 match the Nuclear localization signal 1 motif; that stretch reads RKQLHQLLPSHVLQKRKK. Residues 508 to 643 are ser/Thr-rich; the sequence is HSTEGVKLTA…TKVPNPIVGV (136 aa). The segment covering 523 to 534 has biased composition (low complexity); sequence LDLSMDSDNSMS. The tract at residues 523–725 is disordered; the sequence is LDLSMDSDNS…SDIPALPANP (203 aa). Residues 535–557 show a composition bias toward polar residues; it reads VPSPTSAMKTSPLNSSGSSQGRN. The residue at position 537 (Ser-537) is a Phosphoserine; by MAPK. The residue at position 558 (Ser-558) is a Phosphoserine. Over residues 566-582 the composition is skewed to polar residues; sequence ASVTSIQASEVSVPQAN. Low complexity-rich tracts occupy residues 583–594 and 611–622; these read SSESPGGPSSES and TVSRVVSSTRLV. 2 positions are modified to N6-acetyllysine: Lys-635 and Lys-644. The short motif at 644–659 is the Nuclear localization signal 2 element; the sequence is KRTSSPNKEESPKKTK. Basic and acidic residues-rich tracts occupy residues 650–660 and 676–686; these read NKEESPKKTKT and GHDKTETKEQV. A required for interaction with NUDT21 region spans residues 671-739; sequence CLALSGHDKT…KNSIKLRLNR (69 aa). Polar residues predominate over residues 691 to 715; the sequence is SAVQSETVPASASLLASQKTSSTDL. Position 730 is an N6-acetyllysine; alternate (Lys-730). A Glycyl lysine isopeptide (Lys-Gly) (interchain with G-Cter in SUMO); alternate cross-link involves residue Lys-730. Ser-732 bears the Phosphoserine mark. Lys-734 bears the N6-acetyllysine; alternate mark. Residue Lys-734 forms a Glycyl lysine isopeptide (Lys-Gly) (interchain with G-Cter in SUMO); alternate linkage.

Belongs to the poly(A) polymerase family. In terms of assembly, monomer. Found in a complex with CPSF1, FIP1L1 and PAPOLA. Interacts with AHCYL1 and FIP1L1; the interaction with AHCYL1 seems to increase interaction with FIP1L1. Interacts with NUDT21; the interaction is diminished by acetylation. Interacts with KPNB1; the interaction promotes PAP nuclear import and is inhibited by acetylation of PAP. The cofactor is Mg(2+). Mn(2+) serves as cofactor. Post-translationally, polysumoylated. Varying sumoylation depending on tissue- and cell-type. Highly sumoylated in bladder and NIH 3T3 cells. Sumoylation is required for nuclear localization and enhances PAP stability. Desumoylated by SENP1. Inhibits polymerase activity. Hyperphosphorylation on multiple CDK2 consensus and non-consensus sites in the C-terminal Ser/Thr-rich region represses PAP activity in late M-phase. Phosphorylation/dephosphorylation may regulate the interaction between PAP and CPSF. In terms of processing, acetylated in the C-terminus. Acetylation decreases interaction with NUDT21 and KPNB1, and inhibits nuclear localization through inhibiting binding to the importin alpha/beta complex. As to expression, expressed in brain, thymus, lung, kidney, bladder, testis and spleen.

The protein localises to the nucleus. The catalysed reaction is RNA(n) + ATP = RNA(n)-3'-adenine ribonucleotide + diphosphate. Functionally, polymerase that creates the 3'-poly(A) tail of mRNA's. Also required for the endoribonucleolytic cleavage reaction at some polyadenylation sites. May acquire specificity through interaction with a cleavage and polyadenylation specificity factor (CPSF) at its C-terminus. The chain is Poly(A) polymerase alpha (Papola) from Mus musculus (Mouse).